Here is an 87-residue protein sequence, read N- to C-terminus: Kappa-4-bungarotoxin (87 aa).

A signal peptide spans 1–21; it reads MKTLLLTLVVVTIVCLDLGYT. 5 disulfides stabilise this stretch: Cys-24/Cys-42, Cys-35/Cys-63, Cys-48/Cys-52, Cys-67/Cys-79, and Cys-80/Cys-85.

The protein belongs to the three-finger toxin family. Long-chain subfamily. Kappa-neurotoxin sub-subfamily. In terms of assembly, homo- and heterodimer; non-covalently linked. As to expression, expressed by the venom gland.

It localises to the secreted. In terms of biological role, postsynaptic neurotoxin that binds and inhibits neuronal nicotinic acetylcholine receptors (nAChR) with high affinity (IC(50)&lt;100 nM). Is a selective, and slowly reversible antagonist of alpha-3/CHRNA3-containing and some alpha-4/CHRNA4-containing AChRs. This is Kappa-4-bungarotoxin from Bungarus multicinctus (Many-banded krait).